Consider the following 184-residue polypeptide: GTP-binding protein Rheb (184 aa).

A Glycyl lysine isopeptide (Lys-Gly) (interchain with G-Cter in ubiquitin) cross-link involves residue Lys-8. 8 residues coordinate GDP: Ser-16, Val-17, Gly-18, Lys-19, Ser-20, Ser-21, Val-32, and Asp-33. Residue Ser-16 participates in GTP binding. Positions 18, 19, 20, 21, and 32 each coordinate GTP. Ser-20 lines the Mg(2+) pocket. Positions 35, 38, 119, and 122 each coordinate GTP. The short motif at 35–43 is the Effector region element; it reads YDPTIENTF. Thr-38 is a binding site for Mg(2+). Asn-119 and Asp-122 together coordinate GDP. The residue at position 130 (Ser-130) is a Phosphoserine; by MAPKAPK5. Ala-150 lines the GDP pocket. Ala-150 is a binding site for GTP. Cys-181 bears the Cysteine methyl ester mark. Residue Cys-181 is the site of S-farnesyl cysteine attachment. Residues 182–184 constitute a propeptide, removed in mature form; it reads SVM.

It belongs to the small GTPase superfamily. Rheb family. Associates with the mTORC1 complex (MTOR, MLST8 and RPTOR) in a guanyl nucleotide-independent manner. Interacts with TSC2. Interacts with MCRS1; the interaction maintains RHEB at the lysosome in its active GTP-bound form and prevents its interaction with the mTORC1 complex inhibitor TSC2, ensuring activation of the mTORC1 complex by RHEB. Interacts (when prenylated) with PDE6D; this promotes release from membranes. In terms of processing, farnesylation is important for efficiently activating mTORC1-mediated signaling. Polyubiquitinated in response to amino acid, promoting its interaction with MTOR and mTORC1 activation. Deubiquitination by ATXN3 promotes recruitment of the TSC-TBC complex and RHEB inactivation by TSC2. Monoubiquitinated at Lys-8 by RNF152, promoting its association with the TSC-TBC complex. Deubiquitinated at Lys-8 by USP4, promoting mTORC1 activation. Post-translationally, phosphorylation by MAPKAPK5 impairs GTP-binding and inactivation. In terms of tissue distribution, ubiquitous. Highest levels observed in skeletal and cardiac muscle.

The protein resides in the endomembrane system. It localises to the lysosome membrane. The protein localises to the golgi apparatus membrane. It is found in the endoplasmic reticulum membrane. Its subcellular location is the cytoplasm. The protein resides in the cytosol. The catalysed reaction is GTP + H2O = GDP + phosphate + H(+). Alternates between an inactive form bound to GDP and an active form bound to GTP. Inactivated by the TSC-TBC complex via the GTPase activating protein (GAP) domain of TSC2. Autoinhibited by Tyr-35, which constrains the active site conformation, restricting the access of the catalytic Asp-65 to the nucleotide-binding pocket. Specifically inhibited by NR1 (4-bromo-6-(3,4-dichlorophenylthio)-1-(4-(dimethylcarbamoyl)benzyl)-1H-indole-2-carboxylic acid). Its function is as follows. Small GTPase that acts as an allosteric activator of the canonical mTORC1 complex, an evolutionarily conserved central nutrient sensor that stimulates anabolic reactions and macromolecule biosynthesis to promote cellular biomass generation and growth. In response to nutrients, growth factors or amino acids, specifically activates the protein kinase activity of MTOR, the catalytic component of the mTORC1 complex: acts by causing a conformational change that allows the alignment of residues in the active site of MTOR, thereby enhancing the phosphorylation of ribosomal protein S6 kinase (RPS6KB1 and RPS6KB2) and EIF4EBP1 (4E-BP1). RHEB is also required for localization of the TSC-TBC complex to lysosomal membranes. In response to starvation, RHEB is inactivated by the TSC-TBC complex, preventing activation of mTORC1. Has low intrinsic GTPase activity. The chain is GTP-binding protein Rheb from Homo sapiens (Human).